We begin with the raw amino-acid sequence, 96 residues long: MPSQMEHAMETMMFTFHKFAGDKGYLTKEDLRVLMEKEFPGFLENQKDPLAVDKIMKDLDQCRDGKVGFQSFFSLIAGLTIACNDYFVVHMKQKGK.

2 positions are modified to N6-acetyllysine: Lys23 and Lys28. N6-acetyllysine; alternate is present on Lys37. Residue Lys37 forms a Glycyl lysine isopeptide (Lys-Gly) (interchain with G-Cter in SUMO2); alternate linkage. An N6-acetyllysine mark is found at Lys54 and Lys57. The interval 60 to 71 (DQCRDGKVGFQS) is ancestral calcium site.

Belongs to the S-100 family. In terms of assembly, heterotetramer containing 2 light chains of S100A10/p11 and 2 heavy chains of ANXA2/p36. Interacts with SCN10A. Interacts with TASOR.

Because S100A10 induces the dimerization of ANXA2/p36, it may function as a regulator of protein phosphorylation in that the ANXA2 monomer is the preferred target (in vitro) of tyrosine-specific kinase. This Sus scrofa (Pig) protein is Protein S100-A10 (S100A10).